A 266-amino-acid chain; its full sequence is uncharacterized protein (266 aa).

Transmembrane regions (helical) follow at residues 9-29, 37-57, 69-89, 123-143, 153-173, 184-204, 216-236, and 246-266; these read IAALLAVLSISMVLGIDLFIF, TMPHLGVGVLVAQLISLLVFY, LIKVNMTFAIYWAVWLLISLL, FLLMAALIAGLGCLSYLMIFT, YNPFAPILSGVILANLVLVIA, LPLAMIILLALNALAMFLFLL, SVFAYIIYFVCHFVIAAILIL, and TNSLFILLFIAVCLPLWMVFV.

It localises to the cell membrane. This is an uncharacterized protein from Haemophilus influenzae (strain ATCC 51907 / DSM 11121 / KW20 / Rd).